The primary structure comprises 245 residues: 5-oxoprolinase subunit A (245 aa).

Belongs to the LamB/PxpA family. Forms a complex composed of PxpA, PxpB and PxpC.

It carries out the reaction 5-oxo-L-proline + ATP + 2 H2O = L-glutamate + ADP + phosphate + H(+). Functionally, catalyzes the cleavage of 5-oxoproline to form L-glutamate coupled to the hydrolysis of ATP to ADP and inorganic phosphate. In Chromobacterium violaceum (strain ATCC 12472 / DSM 30191 / JCM 1249 / CCUG 213 / NBRC 12614 / NCIMB 9131 / NCTC 9757 / MK), this protein is 5-oxoprolinase subunit A.